A 944-amino-acid polypeptide reads, in one-letter code: MISALDSIPEPQNFAPSPDFKWLCEELFVKIHEVQINGTAGTGKSRSFKYYEIISNFVEMWRKTVGNNIYPALVLALPYRDRRIYNIKDYVLIRTICSYLKLPKNSATEQRLKDWKQRVGKGGNLSSLLVEEIAKRRAEPSSKAITIDNVNHYLDSLSGDRFASGRGFKSLVKSKPFLHCVENMSFVELKYFFDIVLKNRVIGGQEHKLLNCWHPDAQDYLSVISDLKVVTSKLYDPKVRLKDDDLSIKVGFAFAPQLAKKVNLSYEKICRTLHDDFLVEEKMDGERIQVHYMNYGESIKFFSRRGIDYTYLYGASLSSGTISQHLRFTDSVKECVLDGEMVTFDAKRRVILPFGLVKGSAKEALSFNSINNVDFHPLYMVFDLLYLNGTSLTPLPLHQRKQYLNSILSPLKNIVEIVRSSRCYGVESIKKSLEVAISLGSEGVVLKYYNSSYNVASRNNNWIKVKPEYLEEFGENLDLIVIGRDSGKKDSFMLGLLVLDEEEYKKHQGDSSEIVDHSSQEKHIQNSRRRVKKILSFCSIANGISQEEFKEIDRKTRGHWKRTSEVAPPASILEFGSKIPAEWIDPSESIVLEIKSRSLDNTETNMQKYATNCTLYGGYCKRIRYDKEWTDCYTLNDLYESRTVKSNPSYQAERSQLGLIRKKRKRVLISDSFHQNRKQLPISNIFAGLLFYVLSDYVTEDTGIRITRAELEKTIVEHGGKLIYNVILKRHSIGDVRLISCKTTTECKALIDRGYDILHPNWVLDCIAYKRLILIEPNYCFNVSQKMRAVAEKRVDCLGDSFENDISETKLSSLYKSQLSLPPMGELEIDSEVRRFPLFLFSNRIAYVPRRKISTEDDIIEMKIKLFGGKITDQQSLCNLIIIPYTDPILRKDCMNEVHEKIKEQIKASDTIPKIARVVAPEWVDHSINENCQVPEEDFPVVNY.

Positions 280, 282, 287, 340, 382, 442, 447, 464, and 466 each coordinate ATP. Lys-282 (N6-AMP-lysine intermediate) is an active-site residue. Glu-340 is a Mg(2+) binding site. Glu-442 is a Mg(2+) binding site. BRCT domains lie at 681–780 (PISN…PNYC) and 836–941 (FPLF…DFPV).

It belongs to the ATP-dependent DNA ligase family. Component of the DNA ligase IV complex, composed of DNL4, LIF1 and NEJ1. Interacts (via BRCT domain) with LIF1. Interacts with NEJ1. Interacts with POL4 in the DNL4-LIF1 complex. Requires Mg(2+) as cofactor.

Its subcellular location is the nucleus. It catalyses the reaction ATP + (deoxyribonucleotide)n-3'-hydroxyl + 5'-phospho-(deoxyribonucleotide)m = (deoxyribonucleotide)n+m + AMP + diphosphate.. Functionally, DNA ligase involved in DNA non-homologous end joining (NHEJ); required for double-strand break (DSB) repair. This chain is DNA ligase 4 (DNL4), found in Saccharomyces cerevisiae (strain ATCC 204508 / S288c) (Baker's yeast).